The chain runs to 342 residues: Succinylglutamate desuccinylase (342 aa).

Residues H63, E66, and H155 each contribute to the Zn(2+) site. E219 is a catalytic residue.

This sequence belongs to the AspA/AstE family. Succinylglutamate desuccinylase subfamily. The cofactor is Zn(2+).

The catalysed reaction is N-succinyl-L-glutamate + H2O = L-glutamate + succinate. The protein operates within amino-acid degradation; L-arginine degradation via AST pathway; L-glutamate and succinate from L-arginine: step 5/5. Functionally, transforms N(2)-succinylglutamate into succinate and glutamate. The chain is Succinylglutamate desuccinylase from Vibrio vulnificus (strain CMCP6).